The following is a 542-amino-acid chain: MSDAEDSDSIVNEFVTAIVRESDKFAKVHSYPMQYGTGGYRADAELLSSVAFRTGVIASFLSAKLHGQPVGLMVTASHNASSENGLKIVNILSSLDSSKWEAYLDQVVNADSADELTVCLTSILKKAKIIPGSEARVFVGYDSRSTSEILAQAVIDGIVVCKAKYENFGLLTTPQLHYMVKASQTYGTPDAIGEPTERGYFEKLSKAYQSLMTGKKIKGTVLIDAANGVGAAKIKELAKYIDPKLFPIEIVNDNIDNPELLNNSCGADFVRTQQKPPNGISAPKHARCASFDGDADRIVYFAFGSHSFHLLDGDKICALFAQFLIDLIRSTGLDLQVGIVQTAYANGASTAFFQKTLKVPVLCVSPGLKHLYHAAQAYDVGVFFEANGHGTILVSHAALSKIISHEVLSPAQFNALKTLKTVFELINQTDGDAITNLLLVEVILAHKNCTLKEWNQLYSEIPSRLIRCEVEDRSIYTTTDAEQKLVTPEGLQEKIDALVAKYTGGRAFVRSSGTEDAVRVYAEASSRGESEDLALRIVELLH.

S77 (phosphoserine intermediate) is an active-site residue. Residue S77 participates in Mg(2+) binding. S77 and S82 each carry phosphoserine. Mg(2+) is bound by residues D292, D294, and D296. Substrate is bound by residues 385–387, 510–514, and R519; these read EAN and RSSGT.

The protein belongs to the phosphohexose mutase family. The cofactor is Mg(2+).

Its subcellular location is the cytoplasm. It is found in the nucleus. It catalyses the reaction N-acetyl-alpha-D-glucosamine 1-phosphate = N-acetyl-D-glucosamine 6-phosphate. It participates in nucleotide-sugar biosynthesis; UDP-N-acetyl-alpha-D-glucosamine biosynthesis; N-acetyl-alpha-D-glucosamine 1-phosphate from alpha-D-glucosamine 6-phosphate (route I): step 2/2. Catalyzes the conversion of GlcNAc-6-P into GlcNAc-1-P during the synthesis of uridine diphosphate/UDP-GlcNAc, which is a biosynthetic precursor of chitin and also supplies the amino sugars for N-linked oligosaccharides of glycoproteins. In Schizosaccharomyces pombe (strain 972 / ATCC 24843) (Fission yeast), this protein is Phosphoacetylglucosamine mutase 2.